The sequence spans 254 residues: 4-hydroxy-tetrahydrodipicolinate reductase (254 aa).

Residue G13–M18 coordinates NAD(+). R39 serves as a coordination point for NADP(+). Residues G86 to T88 and A110 to T113 contribute to the NAD(+) site. H143 functions as the Proton donor/acceptor in the catalytic mechanism. H144 serves as a coordination point for (S)-2,3,4,5-tetrahydrodipicolinate. Catalysis depends on K147, which acts as the Proton donor. G153–T154 lines the (S)-2,3,4,5-tetrahydrodipicolinate pocket.

Belongs to the DapB family.

The protein resides in the cytoplasm. The catalysed reaction is (S)-2,3,4,5-tetrahydrodipicolinate + NAD(+) + H2O = (2S,4S)-4-hydroxy-2,3,4,5-tetrahydrodipicolinate + NADH + H(+). It catalyses the reaction (S)-2,3,4,5-tetrahydrodipicolinate + NADP(+) + H2O = (2S,4S)-4-hydroxy-2,3,4,5-tetrahydrodipicolinate + NADPH + H(+). It functions in the pathway amino-acid biosynthesis; L-lysine biosynthesis via DAP pathway; (S)-tetrahydrodipicolinate from L-aspartate: step 4/4. Catalyzes the conversion of 4-hydroxy-tetrahydrodipicolinate (HTPA) to tetrahydrodipicolinate. The protein is 4-hydroxy-tetrahydrodipicolinate reductase of Zymomonas mobilis subsp. mobilis (strain ATCC 31821 / ZM4 / CP4).